A 217-amino-acid polypeptide reads, in one-letter code: Uracil-DNA glycosylase (217 aa).

The active-site Proton acceptor is the D62.

Belongs to the uracil-DNA glycosylase (UDG) superfamily. UNG family.

It is found in the cytoplasm. The catalysed reaction is Hydrolyzes single-stranded DNA or mismatched double-stranded DNA and polynucleotides, releasing free uracil.. Excises uracil residues from the DNA which can arise as a result of misincorporation of dUMP residues by DNA polymerase or due to deamination of cytosine. This chain is Uracil-DNA glycosylase, found in Streptococcus mutans serotype c (strain ATCC 700610 / UA159).